A 481-amino-acid polypeptide reads, in one-letter code: MLRGARSHLPASVAPAAVLAAALLSSFARCSLPGRGDPVASVLSPYFGTKTRYEDANPWLLVDPVAPRRDPELLAGTCTPVQLVALIRHGTRYPTTKQIRKLKQLQGLLQTRESRDGGSQVAAALAEWPLWYGDWMDGQLVEKGRQDMRQLALRLAALFPDLFSRENYDRLRLITSSKHRCVDSSAAFLQGLWQHYHPGLPPPDVSDMECGPPRINDKLMRFFDHCEKFLTDVERNETALYHVEAFKTGPEMQKVLKKVAATLQVPMNSLNADLIQVAFFTCSFDLAIKGVHSPWCDVFDVDDARVLEYLNDLKQYWKRSYGYTINSRSSCNLFQDIFLHLDKAVEQKQRSQPVSSPVILQFGHAETLLPLLSLMGYFKDKEPLTAYNFEEQVNRKFRSGHIVPYASNLIFVLYHCDNAQSPEEQFQIQLLLNEKVLPLAHSQRPVGLYEELKTHYRDILQSCQTSKECSPPKANITSDEL.

An N-terminal signal peptide occupies residues 1–30 (MLRGARSHLPASVAPAAVLAAALLSSFARC). Histidine 89 is a catalytic residue. N-linked (GlcNAc...) asparagine glycosylation is found at asparagine 236 and asparagine 475. The Prevents secretion from ER signature appears at 478 to 481 (SDEL).

It belongs to the histidine acid phosphatase family. MINPP1 subfamily. In terms of processing, N-glycosylated. As to expression, widely expressed with highest levels in kidney, intestine, thymus and liver.

It is found in the endoplasmic reticulum lumen. The protein localises to the secreted. It localises to the cell membrane. The enzyme catalyses 1D-myo-inositol hexakisphosphate + H2O = 1D-myo-inositol 1,2,4,5,6-pentakisphosphate + phosphate. It carries out the reaction 1D-myo-inositol 1,2,4,5,6-pentakisphosphate + H2O = 1D-myo-inositol 1,2,5,6-tetrakisphosphate + phosphate. The catalysed reaction is 1D-myo-inositol 1,2,5,6-tetrakisphosphate + H2O = 1D-myo-inositol 1,2,6-trisphosphate + phosphate. It catalyses the reaction 1D-myo-inositol 1,2,6-trisphosphate + H2O = 1D-myo-inositol 1,2-bisphosphate + phosphate. The enzyme catalyses 1D-myo-inositol 1,2-bisphosphate + H2O = 1D-myo-inositol 2-phosphate + phosphate. It carries out the reaction 1D-myo-inositol hexakisphosphate + H2O = 1D-myo-inositol 1,2,3,5,6-pentakisphosphate + phosphate. The catalysed reaction is 1D-myo-inositol 1,2,3,5,6-pentakisphosphate + H2O = 1D-myo-inositol 1,2,3,6-tetrakisphosphate + phosphate. It catalyses the reaction 1D-myo-inositol 1,2,3,6-tetrakisphosphate + H2O = 1D-myo-inositol 1,2,3-trisphosphate + phosphate. The enzyme catalyses 1D-myo-inositol 1,2,3-trisphosphate + H2O = 1D-myo-inositol 2,3-bisphosphate + phosphate. It carries out the reaction 1D-myo-inositol 2,3-bisphosphate + H2O = 1D-myo-inositol 2-phosphate + phosphate. The catalysed reaction is 1D-myo-inositol 1,3,4,5,6-pentakisphosphate + H2O = 1D-myo-inositol 1,4,5,6-tetrakisphosphate + phosphate. It catalyses the reaction 1D-myo-inositol 1,4,5,6-tetrakisphosphate + H2O = 1D-myo-inositol 1,4,5-trisphosphate + phosphate. The enzyme catalyses (2R)-2,3-bisphosphoglycerate + H2O = (2R)-2-phosphoglycerate + phosphate. Multiple inositol polyphosphate phosphatase that hydrolyzes 1D-myo-inositol 1,3,4,5,6-pentakisphosphate (InsP5[2OH]) and 1D-myo-inositol hexakisphosphate (InsP6) to a range of less phosphorylated inositol phosphates. This regulates the availability of these various small molecule second messengers and metal chelators which control many aspects of cell physiology. Has a weak in vitro activity towards 1D-myo-inositol 1,4,5-trisphosphate which is unlikely to be physiologically relevant. By regulating intracellular inositol polyphosphates pools, which act as metal chelators, it may control the availability of intracellular calcium and iron, which are important for proper neuronal development and homeostasis. May have a dual substrate specificity, and function as a 2,3-bisphosphoglycerate 3-phosphatase hydrolyzing 2,3-bisphosphoglycerate to 2-phosphoglycerate. 2,3-bisphosphoglycerate (BPG) is formed as part of the Rapoport-Luebering glycolytic bypass and is a regulator of systemic oxygen homeostasis as the major allosteric effector of hemoglobin. In Mus musculus (Mouse), this protein is Multiple inositol polyphosphate phosphatase 1.